Reading from the N-terminus, the 343-residue chain is Adenine deaminase (343 aa).

Zn(2+) is bound by residues His-17, His-19, and His-197. The active-site Proton donor is Glu-200. Asp-278 is a binding site for Zn(2+). Residue Asp-279 coordinates substrate.

It belongs to the metallo-dependent hydrolases superfamily. Adenosine and AMP deaminases family. Adenine deaminase type 2 subfamily. Zn(2+) serves as cofactor.

It catalyses the reaction adenine + H2O + H(+) = hypoxanthine + NH4(+). Catalyzes the hydrolytic deamination of adenine to hypoxanthine. Plays an important role in the purine salvage pathway and in nitrogen catabolism. The polypeptide is Adenine deaminase (Rhodopseudomonas palustris (strain BisB18)).